We begin with the raw amino-acid sequence, 411 residues long: Serine hydroxymethyltransferase (411 aa).

A (6S)-5,6,7,8-tetrahydrofolate-binding site is contributed by 120–122 (GHL). Position 225 is an N6-(pyridoxal phosphate)lysine (K225). 350 to 352 (SPF) contributes to the (6S)-5,6,7,8-tetrahydrofolate binding site.

This sequence belongs to the SHMT family. Homodimer. Requires pyridoxal 5'-phosphate as cofactor.

Its subcellular location is the cytoplasm. It carries out the reaction (6R)-5,10-methylene-5,6,7,8-tetrahydrofolate + glycine + H2O = (6S)-5,6,7,8-tetrahydrofolate + L-serine. It functions in the pathway one-carbon metabolism; tetrahydrofolate interconversion. The protein operates within amino-acid biosynthesis; glycine biosynthesis; glycine from L-serine: step 1/1. Its function is as follows. Catalyzes the reversible interconversion of serine and glycine with tetrahydrofolate (THF) serving as the one-carbon carrier. This reaction serves as the major source of one-carbon groups required for the biosynthesis of purines, thymidylate, methionine, and other important biomolecules. Also exhibits THF-independent aldolase activity toward beta-hydroxyamino acids, producing glycine and aldehydes, via a retro-aldol mechanism. The protein is Serine hydroxymethyltransferase of Lactobacillus johnsonii (strain CNCM I-12250 / La1 / NCC 533).